A 127-amino-acid chain; its full sequence is Translation initiation factor 5A (127 aa).

The residue at position 35 (K35) is a Hypusine.

Belongs to the eIF-5A family.

It is found in the cytoplasm. Its function is as follows. Functions by promoting the formation of the first peptide bond. This chain is Translation initiation factor 5A (eIF5A), found in Methanothrix thermoacetophila (strain DSM 6194 / JCM 14653 / NBRC 101360 / PT) (Methanosaeta thermophila).